Reading from the N-terminus, the 113-residue chain is Dolichyl-diphosphooligosaccharide--protein glycosyltransferase subunit DAD1 (113 aa).

N-acetylserine is present on Ser-2. Topologically, residues 2 to 30 (SASVVSVISRFLEEYLSSTPQRLKLLDAY) are cytoplasmic. The chain crosses the membrane as a helical span at residues 31–51 (LLYILLTGALQFGYCLLVGTF). A topological domain (lumenal) is located at residue Pro-52. Residues 53–73 (FNSFLSGFISCVGSFILAVRL) form a helical membrane-spanning segment. At 74-92 (RIQINPQNKADFQGISPER) the chain is on the cytoplasmic side. Residues 93–113 (AFADFLFASTILHLVVMNFVG) traverse the membrane as a helical segment.

This sequence belongs to the DAD/OST2 family. As to quaternary structure, component of the oligosaccharyltransferase (OST) complex. OST exists in two different complex forms which contain common core subunits RPN1, RPN2, OST48, OST4, DAD1 and TMEM258, either STT3A or STT3B as catalytic subunits, and form-specific accessory subunits. STT3A complex assembly occurs through the formation of 3 subcomplexes. Subcomplex 1 contains RPN1 and TMEM258, subcomplex 2 contains the STT3A-specific subunits STT3A, DC2/OSTC, and KCP2 as well as the core subunit OST4, and subcomplex 3 contains RPN2, DAD1, and OST48. The STT3A complex can form stable complexes with the Sec61 complex or with both the Sec61 and TRAP complexes.

It localises to the endoplasmic reticulum membrane. It participates in protein modification; protein glycosylation. In terms of biological role, subunit of the oligosaccharyl transferase (OST) complex that catalyzes the initial transfer of a defined glycan (Glc(3)Man(9)GlcNAc(2) in eukaryotes) from the lipid carrier dolichol-pyrophosphate to an asparagine residue within an Asn-X-Ser/Thr consensus motif in nascent polypeptide chains, the first step in protein N-glycosylation. N-glycosylation occurs cotranslationally and the complex associates with the Sec61 complex at the channel-forming translocon complex that mediates protein translocation across the endoplasmic reticulum (ER). All subunits are required for a maximal enzyme activity. The sequence is that of Dolichyl-diphosphooligosaccharide--protein glycosyltransferase subunit DAD1 from Pongo abelii (Sumatran orangutan).